The primary structure comprises 91 residues: UPF0512 protein E (91 aa).

Positions 1-25 (MAIFKSISSISNSTSAMGSSNSTSN) are enriched in low complexity. The segment at 1-26 (MAIFKSISSISNSTSAMGSSNSTSNR) is disordered.

Belongs to the UPF0512 family.

This is UPF0512 protein E from Dictyostelium discoideum (Social amoeba).